A 159-amino-acid chain; its full sequence is LOB domain-containing protein 25 (159 aa).

The 102-residue stretch at 38 to 139 folds into the LOB domain; the sequence is SPCAACKFLR…RELEETNADL (102 aa).

Belongs to the LOB domain-containing protein family. As to expression, expressed in young shoots, roots, stems, leaves and flowers.

In Arabidopsis thaliana (Mouse-ear cress), this protein is LOB domain-containing protein 25 (LBD25).